A 156-amino-acid polypeptide reads, in one-letter code: Putative NrdI-like protein (156 aa).

The sequence is that of Putative NrdI-like protein from Streptococcus pneumoniae (strain ATCC BAA-255 / R6).